A 187-amino-acid polypeptide reads, in one-letter code: U8 snoRNA-decapping enzyme (187 aa).

Positions 43–187 (NSSQASHCMI…GFPTFLTTPS (145 aa)) constitute a Nudix hydrolase domain. Position 82 (F82) interacts with substrate. Mn(2+)-binding residues include G84, E100, E104, and E160. Positions 85–106 (GLVDAGEDSIKALNRELTEEMN) match the Nudix box motif.

It belongs to the Nudix hydrolase family. NUDT16 subfamily. As to quaternary structure, homodimer. Mg(2+) serves as cofactor. Requires Mn(2+) as cofactor. Co(2+) is required as a cofactor.

The protein localises to the nucleus. The protein resides in the nucleolus. It localises to the nucleoplasm. Its subcellular location is the cytoplasm. It carries out the reaction a 5'-end (N(7)-methyl 5'-triphosphoguanosine)-ribonucleoside in mRNA + H2O = N(7)-methyl-GDP + a 5'-end phospho-ribonucleoside in mRNA + 2 H(+). The catalysed reaction is IDP + H2O = IMP + phosphate + H(+). It catalyses the reaction dIDP + H2O = dIMP + phosphate + H(+). In terms of biological role, RNA-binding and decapping enzyme that catalyzes the cleavage of the cap structure of snoRNAs in a metal-dependent manner. Has diphosphatase activity and removes m7G caps from U8 snoRNA. May catalyze the cleavage of the cap structure on mRNAs. May also act as a phosphatase; hydrolyzes the non-canonical purine nucleotides inosine diphosphate (IDP) and deoxyinosine diphosphate (dITP). May bind to the U8 snoRNA. The sequence is that of U8 snoRNA-decapping enzyme (NUDT16) from Homalodisca vitripennis (Glassy-winged sharpshooter).